The sequence spans 214 residues: ATP synthase subunit 5, mitochondrial (214 aa).

A mitochondrion-targeting transit peptide spans 1–24 (MFASRAIRMMSMRPMARTMATKAA).

As to quaternary structure, F-type ATP synthases have 2 components, the catalytic core F(1) and the membrane-embedded component F(0), linked together by a central stalk and a peripheral stalk. The central stalk, also called rotor shaft, is often seen as part of F(1). The peripheral stalk is seen as part of F(0). F(0) contains the membrane channel next to the rotor. F-type ATP synthases form dimers but each monomer functions independently in ATP generation. The dimer consists of 17 different polypeptides: ATP1 (subunit alpha, 3 molecules per monomer, part of F(1)), ATP2 (subunit beta, 3 copies per monomer, part of F(1)), ATP3 (subunit gamma, part of the central stalk), ATP4 (subunit b, part of the peripheral stalk), ATP5/OSCP (subunit 5/OSCP, part of the peripheral stalk), ATP6 (subunit a, part of the peripheral stalk), ATP7 (subunit d, part of the peripheral stalk), ATP8 (subunit 8, part of the peripheral stalk), OLI1 (subunit c, part of the rotor, 10 molecules per monomer), ATP14 (subunit h, part of the peripheral stalk), ATP15 (subunit epsilon, part of the central stalk), ATP16 (subunit delta, part of the central stalk), ATP17 (subunit f, part of the peripheral stalk), ATP18 (subunit i/j, part of the peripheral stalk), ATP19 (subunit k, dimer-specific, at interface between monomers), ATP20 (subunit g, at interface between monomers), TIM11 (subunit e, at interface between monomers).

It is found in the mitochondrion inner membrane. Its function is as follows. Mitochondrial membrane ATP synthase (F(1)F(0) ATP synthase or Complex V) produces ATP from ADP in the presence of a proton gradient across the membrane which is generated by electron transport complexes of the respiratory chain. F-type ATP synthases consist of two structural domains, F(1) - containing the extramembraneous catalytic core, and F(0) - containing the membrane proton channel, linked together by a central stalk and a peripheral stalk. During catalysis, ATP synthesis in the catalytic domain of F(1) is coupled via a rotary mechanism of the central stalk subunits to proton translocation. Part of the complex F(0) domain and the peripheral stalk, which acts as a stator to hold the catalytic alpha/ATP1(3)beta/ATP2(3) subcomplex and subunit a/ATP6 static relative to the rotary elements. The sequence is that of ATP synthase subunit 5, mitochondrial from Yarrowia lipolytica (strain CLIB 122 / E 150) (Yeast).